Reading from the N-terminus, the 314-residue chain is MKLTFLGTGAAIPTKYRAHPSISLKFDGEIFLFDCGENTQRQIIFTDVSPMKINNIFISHLHGDHVLGIPGLLQSIAFQGRTKPLNIYGPEETAKMIKNILNVGYHSIDYPINVYEISSKTSEKIISTDNYDVFSFPVVHSVPAVAYVFRQVKKPRMDLEKVNKLGIEIGPDLKRLKDGYNVELNGKIITPEDVTLPPKKGICVGYSGDTIPLNEFADFLKELKCTILIHEATFDKTMDKNAKETLHSTVHDALNIAKRSGANTVILTHISARYDELSAFEKDVVEFKVEHPDLHVLIAEDLMEYSLKGKWVKM.

Zn(2+)-binding residues include histidine 60, histidine 62, aspartate 64, histidine 65, histidine 140, aspartate 209, and histidine 269. The active-site Proton acceptor is the aspartate 64.

Belongs to the RNase Z family. In terms of assembly, homodimer. Requires Zn(2+) as cofactor.

The catalysed reaction is Endonucleolytic cleavage of RNA, removing extra 3' nucleotides from tRNA precursor, generating 3' termini of tRNAs. A 3'-hydroxy group is left at the tRNA terminus and a 5'-phosphoryl group is left at the trailer molecule.. In terms of biological role, zinc phosphodiesterase, which displays some tRNA 3'-processing endonuclease activity. Probably involved in tRNA maturation, by removing a 3'-trailer from precursor tRNA. The protein is Ribonuclease Z of Methanococcus maripaludis (strain C5 / ATCC BAA-1333).